We begin with the raw amino-acid sequence, 238 residues long: Cysteine-rich venom protein 1 (238 aa).

Residues 1 to 19 form the signal peptide; it reads MIAFIVLLSLAAVLQQSSG. In terms of domain architecture, SCP spans 38 to 164; sequence VDKHNALRRS…STKYLYVCQY (127 aa). Disulfide bonds link C75–C153, C92–C165, C148–C162, C184–C191, C187–C196, C200–C233, C209–C227, and C218–C231. In terms of domain architecture, ShKT spans 200 to 233; that stretch reads CEYEDTFSNCKALAKKTKCKTEWIKSKCPATCFC.

Belongs to the CRISP family. Expressed by the venom gland.

The protein localises to the secreted. Functionally, blocks contraction of smooth muscle elicited by high potassium-induced depolarization, but does not block caffeine-stimulated contraction. May target voltage-gated calcium channels on smooth muscle. The sequence is that of Cysteine-rich venom protein 1 from Hydrophis hardwickii (Hardwick's spine-bellied seasnake).